The primary structure comprises 852 residues: Taste receptor type 1 member 3 (852 aa).

An N-terminal signal peptide occupies residues 1-20 (MLGPAVLGLSLWALLQPGAG). The Extracellular segment spans residues 21 to 570 (APLCLSQQLR…FLAWGEPAVL (550 aa)). N-linked (GlcNAc...) asparagine glycosylation is found at asparagine 85, asparagine 130, asparagine 264, asparagine 285, asparagine 380, asparagine 411, asparagine 432, and asparagine 475. Residues 571–591 (LLLLLLSLALGLVLAALGLFV) traverse the membrane as a helical segment. The Cytoplasmic portion of the chain corresponds to 592-603 (HHRDSPLVQASG). A helical membrane pass occupies residues 604–624 (GPLACFGLVCLGLVCLSVLLF). The Extracellular portion of the chain corresponds to 625-639 (PGQPSPAQCLAQQPL). The helical transmembrane segment at 640–660 (SHLPLTGCLSTLFLQAAEIFV) threads the bilayer. The Cytoplasmic portion of the chain corresponds to 661–682 (ESELPLSWADRLSGCLRGPWAW). A helical transmembrane segment spans residues 683–703 (LVVLLAMLVEVALCTWYLVAF). The Extracellular segment spans residues 704–729 (PPEVVTDWHMLPTEALVHCRTRSWVS). A helical transmembrane segment spans residues 730–750 (FGLAHATNATLAFLCFLGTFL). The Cytoplasmic segment spans residues 751 to 762 (VRSQPGRYNRAR). Residues 763–783 (GLTFAMLAYFITWVSFVPLLA) form a helical membrane-spanning segment. The Extracellular portion of the chain corresponds to 784–791 (NVQVVLRP). A helical membrane pass occupies residues 792 to 812 (AVQMGALLLCVLGILAAFHLP). Residues 813-852 (RCYLLIRQPGLNTPEFFLGGGPGDAQGRNDGDTGNQGKHE) lie on the Cytoplasmic side of the membrane. The tract at residues 833 to 852 (GPGDAQGRNDGDTGNQGKHE) is disordered. Residues 839–852 (GRNDGDTGNQGKHE) are compositionally biased toward basic and acidic residues.

The protein belongs to the G-protein coupled receptor 3 family. TAS1R subfamily. In terms of assembly, forms homodimers or heterodimers with TAS1R1 and TAS1R2.

The protein localises to the cell membrane. Functionally, putative taste receptor. TAS1R1/TAS1R3 responds to the umami taste stimulus (the taste of monosodium glutamate). TAS1R2/TAS1R3 recognizes diverse natural and synthetic sweeteners. TAS1R3 is essential for the recognition and response to the disaccharide trehalose. Sequence differences within and between species can significantly influence the selectivity and specificity of taste responses. This Gorilla gorilla gorilla (Western lowland gorilla) protein is Taste receptor type 1 member 3 (TAS1R3).